The sequence spans 313 residues: Pyrimidine-specific ribonucleoside hydrolase RihB (313 aa).

The Proton acceptor role is filled by D11. The Ca(2+) site is built by D11, D16, and V124. 2 residues coordinate substrate: Q227 and H239. D240 contacts Ca(2+).

The protein belongs to the IUNH family. RihB subfamily. Homotetramer. Ca(2+) serves as cofactor.

It catalyses the reaction a pyrimidine ribonucleoside + H2O = a pyrimidine nucleobase + D-ribose. Hydrolyzes cytidine or uridine to ribose and cytosine or uracil, respectively. Has a clear preference for cytidine over uridine. Strictly specific for ribonucleosides. This is Pyrimidine-specific ribonucleoside hydrolase RihB from Escherichia coli O9:H4 (strain HS).